We begin with the raw amino-acid sequence, 335 residues long: Ferredoxin--NADP reductase (335 aa).

FAD is bound by residues Asp-34, Gln-42, Tyr-47, Ala-87, Phe-121, Asp-287, and Thr-328.

The protein belongs to the ferredoxin--NADP reductase type 2 family. In terms of assembly, homodimer. FAD is required as a cofactor.

The catalysed reaction is 2 reduced [2Fe-2S]-[ferredoxin] + NADP(+) + H(+) = 2 oxidized [2Fe-2S]-[ferredoxin] + NADPH. The polypeptide is Ferredoxin--NADP reductase (Rickettsia felis (strain ATCC VR-1525 / URRWXCal2) (Rickettsia azadi)).